The chain runs to 514 residues: Photosystem II CP47 reaction center protein (514 aa).

Transmembrane regions (helical) follow at residues 21 to 36 (AVHL…WAGS), 109 to 123 (IVLS…VWHW), 148 to 164 (GGHL…FGTF), 211 to 226 (IAAG…FHLT), 245 to 260 (ALAS…AFVV), and 465 to 480 (CFAL…HGAR).

The protein belongs to the PsbB/PsbC family. PsbB subfamily. As to quaternary structure, PSII is composed of 1 copy each of membrane proteins PsbA, PsbB, PsbC, PsbD, PsbE, PsbF, PsbH, PsbI, PsbJ, PsbK, PsbL, PsbM, PsbT, PsbX, PsbY, PsbZ, Psb30/Ycf12, peripheral proteins PsbO, CyanoQ (PsbQ), PsbU, PsbV and a large number of cofactors. It forms dimeric complexes. Binds multiple chlorophylls. PSII binds additional chlorophylls, carotenoids and specific lipids. serves as cofactor.

It localises to the cellular thylakoid membrane. Functionally, one of the components of the core complex of photosystem II (PSII). It binds chlorophyll and helps catalyze the primary light-induced photochemical processes of PSII. PSII is a light-driven water:plastoquinone oxidoreductase, using light energy to abstract electrons from H(2)O, generating O(2) and a proton gradient subsequently used for ATP formation. The polypeptide is Photosystem II CP47 reaction center protein (Prochlorothrix hollandica).